Reading from the N-terminus, the 473-residue chain is RUN domain-containing protein 3B (473 aa).

The tract at residues 1–24 (MASRSLGGLSGIRGGGGGGGKKSL) is disordered. The span at 8–21 (GLSGIRGGGGGGGK) shows a compositional bias: gly residues. An Omega-N-methylarginine modification is found at Arg13. One can recognise an RUN domain in the interval 57 to 206 (DDSSPEFNNF…IDFSFCLKGE (150 aa)). Ser232 and Ser233 each carry phosphoserine. Residues 317–342 (AHKLEKEQLEYIIVELQDQLTVLKNN) adopt a coiled-coil conformation. Positions 399–422 (SLSQTSLDPGQSQEGDGKQDTLNV) are enriched in polar residues. The interval 399-428 (SLSQTSLDPGQSQEGDGKQDTLNVMSEGKE) is disordered.

Belongs to the RUNDC3 family. As to quaternary structure, interacts with RAP2A. In terms of tissue distribution, isoform 2 is expressed at high levels in brain, thymus, ovary, testis, leukocyte, liver, small intestine and prostate. Isoform 1 is expressed in the brain, testis and adrenal gland. It is activated in tumorigenic breast cancer cell lines and in the primary tumor of breast cancer patients. Activation also correlates with metastatic lymph node invasion and can be detected in metastatic epithelial cells from the lymph nodes and in the bone marrow of patients.

In Homo sapiens (Human), this protein is RUN domain-containing protein 3B (RUNDC3B).